The sequence spans 133 residues: Small ribosomal subunit protein uS9 (133 aa).

The segment at 94–133 (SADNRKPLKTEGHLSRDPRAKERRKYGLKKARKAPQFSKR) is disordered. The segment covering 95-113 (ADNRKPLKTEGHLSRDPRA) has biased composition (basic and acidic residues). The span at 114 to 133 (KERRKYGLKKARKAPQFSKR) shows a compositional bias: basic residues.

The protein belongs to the universal ribosomal protein uS9 family.

The polypeptide is Small ribosomal subunit protein uS9 (Synechococcus sp. (strain CC9605)).